We begin with the raw amino-acid sequence, 256 residues long: Triosephosphate isomerase (256 aa).

9-11 (NWK) contributes to the substrate binding site. Residue His95 is the Electrophile of the active site. The active-site Proton acceptor is the Glu167. Substrate is bound by residues Gly173, Ser213, and 234-235 (GG).

This sequence belongs to the triosephosphate isomerase family. Homodimer.

It localises to the cytoplasm. It carries out the reaction D-glyceraldehyde 3-phosphate = dihydroxyacetone phosphate. The protein operates within carbohydrate biosynthesis; gluconeogenesis. It functions in the pathway carbohydrate degradation; glycolysis; D-glyceraldehyde 3-phosphate from glycerone phosphate: step 1/1. Involved in the gluconeogenesis. Catalyzes stereospecifically the conversion of dihydroxyacetone phosphate (DHAP) to D-glyceraldehyde-3-phosphate (G3P). The polypeptide is Triosephosphate isomerase (Symbiobacterium thermophilum (strain DSM 24528 / JCM 14929 / IAM 14863 / T)).